Consider the following 248-residue polypeptide: 2,3-bisphosphoglycerate-dependent phosphoglycerate mutase (248 aa).

Substrate-binding positions include 8–15 (RHGESGWN) and arginine 58. The active-site Tele-phosphohistidine intermediate is histidine 9. The segment at 82–101 (GTGEDRTEREDGSRKDRKEK) is disordered. Glutamate 124 (proton donor/acceptor) is an active-site residue. Substrate contacts are provided by residues 124–127 (ERYY) and lysine 135.

Belongs to the phosphoglycerate mutase family. BPG-dependent PGAM subfamily.

It catalyses the reaction (2R)-2-phosphoglycerate = (2R)-3-phosphoglycerate. The protein operates within carbohydrate degradation; glycolysis; pyruvate from D-glyceraldehyde 3-phosphate: step 3/5. In terms of biological role, catalyzes the interconversion of 2-phosphoglycerate and 3-phosphoglycerate. This is 2,3-bisphosphoglycerate-dependent phosphoglycerate mutase from Methanosarcina acetivorans (strain ATCC 35395 / DSM 2834 / JCM 12185 / C2A).